The primary structure comprises 257 residues: Acetylglutamate kinase (257 aa).

Substrate is bound by residues 43–44 (GG), arginine 65, and asparagine 157.

The protein belongs to the acetylglutamate kinase family. ArgB subfamily.

The protein resides in the cytoplasm. It catalyses the reaction N-acetyl-L-glutamate + ATP = N-acetyl-L-glutamyl 5-phosphate + ADP. The protein operates within amino-acid biosynthesis; L-arginine biosynthesis; N(2)-acetyl-L-ornithine from L-glutamate: step 2/4. Its function is as follows. Catalyzes the ATP-dependent phosphorylation of N-acetyl-L-glutamate. The sequence is that of Acetylglutamate kinase from Pasteurella multocida (strain Pm70).